The primary structure comprises 150 residues: Small ribosomal subunit protein eS19S (150 aa).

The protein belongs to the eukaryotic ribosomal protein eS19 family.

The chain is Small ribosomal subunit protein eS19S (RPS19S) from Ascaris suum (Pig roundworm).